The following is a 348-amino-acid chain: F-box protein At2g20380 (348 aa).

One can recognise an F-box domain in the interval 14–60 (SPESNSLPNDLIVTILARLSQSYYPKLSLVSKTFRAILASPELYQTR).

The chain is F-box protein At2g20380 from Arabidopsis thaliana (Mouse-ear cress).